The sequence spans 711 residues: DNA topoisomerase 1 (711 aa).

Positions 3–134 (KNLVVIESPN…KCQRITFNEI (132 aa)) constitute a Toprim domain. Residues E9 and D102 each contribute to the Mg(2+) site. Residues 150 to 604 (DQSWVQSQFA…FWSNFKEEVK (455 aa)) form the Topo IA-type catalytic domain. Positions 183-188 (SAGRVQ) are interaction with DNA. Catalysis depends on Y340, which acts as the O-(5'-phospho-DNA)-tyrosine intermediate. C4-type zinc fingers lie at residues 624–652 (CPSCASPLLYRYTKRGNEKFVGCSNFPNC) and 673–702 (CPECNSQLVKRRTKFNPNKTFVGCSNFPRC).

The protein belongs to the type IA topoisomerase family. As to quaternary structure, monomer. The cofactor is Mg(2+).

The catalysed reaction is ATP-independent breakage of single-stranded DNA, followed by passage and rejoining.. Functionally, releases the supercoiling and torsional tension of DNA, which is introduced during the DNA replication and transcription, by transiently cleaving and rejoining one strand of the DNA duplex. Introduces a single-strand break via transesterification at a target site in duplex DNA. The scissile phosphodiester is attacked by the catalytic tyrosine of the enzyme, resulting in the formation of a DNA-(5'-phosphotyrosyl)-enzyme intermediate and the expulsion of a 3'-OH DNA strand. The free DNA strand then undergoes passage around the unbroken strand, thus removing DNA supercoils. Finally, in the religation step, the DNA 3'-OH attacks the covalent intermediate to expel the active-site tyrosine and restore the DNA phosphodiester backbone. The protein is DNA topoisomerase 1 of Mycoplasma pneumoniae (strain ATCC 29342 / M129 / Subtype 1) (Mycoplasmoides pneumoniae).